The sequence spans 164 residues: V-type proton ATPase subunit c3 (164 aa).

The Lumenal portion of the chain corresponds to 1–11 (MSTFSGDETAP). A helical transmembrane segment spans residues 12–32 (FFGFLGAAAALVFSCMGAAYG). Topologically, residues 33–54 (TAKSGVGVASMGVMRPELVMKS) are cytoplasmic. The helical transmembrane segment at 55–75 (IVPVVMAGVLGIYGLIIAVII) threads the bilayer. Residues 76–94 (STGINPKAKSYYLFDGYAH) are Lumenal-facing. The helical transmembrane segment at 95–116 (LSSGLACGLAGLSAGMAIGIVG) threads the bilayer. At 117–128 (DAGVRANAQQPK) the chain is on the cytoplasmic side. The helical transmembrane segment at 129 to 154 (LFVGMILILIFAEALALYGLIVGIIL) threads the bilayer. At 155–164 (SSRAGQSRAE) the chain is on the lumenal side.

It belongs to the V-ATPase proteolipid subunit family. As to quaternary structure, V-ATPase is a heteromultimeric enzyme composed of a peripheral catalytic V1 complex (components A to H) attached to an integral membrane V0 proton pore complex (components: a, c, c'', d and e). The proteolipid components c and c'' are present as a hexameric ring that forms the proton-conducting pore. Expressed in leaf, root, flower and silique.

Its subcellular location is the vacuole membrane. Its function is as follows. Proton-conducting pore forming subunit of the membrane integral V0 complex of vacuolar ATPase. V-ATPase is responsible for acidifying a variety of intracellular compartments in eukaryotic cells. This is V-type proton ATPase subunit c3 (VHA-c3) from Arabidopsis thaliana (Mouse-ear cress).